Here is a 237-residue protein sequence, read N- to C-terminus: tRNA (guanine-N(7)-)-methyltransferase (237 aa).

S-adenosyl-L-methionine is bound by residues Glu-65, Glu-90, Asp-117, and Asp-140. Asp-140 is an active-site residue. Residues Lys-144, Asp-176, and 212–215 contribute to the substrate site; that span reads TKFE. Residues 197 to 217 are disordered; the sequence is TCGPRQFSPRGERPETKFERR. Residues 206–217 are compositionally biased toward basic and acidic residues; that stretch reads RGERPETKFERR.

The protein belongs to the class I-like SAM-binding methyltransferase superfamily. TrmB family.

The catalysed reaction is guanosine(46) in tRNA + S-adenosyl-L-methionine = N(7)-methylguanosine(46) in tRNA + S-adenosyl-L-homocysteine. It functions in the pathway tRNA modification; N(7)-methylguanine-tRNA biosynthesis. Its function is as follows. Catalyzes the formation of N(7)-methylguanine at position 46 (m7G46) in tRNA. This Alkalilimnicola ehrlichii (strain ATCC BAA-1101 / DSM 17681 / MLHE-1) protein is tRNA (guanine-N(7)-)-methyltransferase.